The chain runs to 426 residues: Dihydroorotase (426 aa).

Zn(2+)-binding residues include histidine 58 and histidine 60. Substrate-binding positions include 60-62 (HLR) and asparagine 92. Aspartate 150, histidine 177, and histidine 230 together coordinate Zn(2+). Position 276 (asparagine 276) interacts with substrate. Position 303 (aspartate 303) interacts with Zn(2+). Aspartate 303 is a catalytic residue. Residues histidine 307 and 321–322 (FG) contribute to the substrate site.

This sequence belongs to the metallo-dependent hydrolases superfamily. DHOase family. Class I DHOase subfamily. The cofactor is Zn(2+).

The catalysed reaction is (S)-dihydroorotate + H2O = N-carbamoyl-L-aspartate + H(+). It participates in pyrimidine metabolism; UMP biosynthesis via de novo pathway; (S)-dihydroorotate from bicarbonate: step 3/3. Catalyzes the reversible cyclization of carbamoyl aspartate to dihydroorotate. The polypeptide is Dihydroorotase (Listeria monocytogenes serotype 4b (strain CLIP80459)).